The sequence spans 264 residues: Phosphonoacetaldehyde hydrolase (264 aa).

The active-site Nucleophile is the Asp9. The Mg(2+) site is built by Asp9 and Ala11. Residue Lys50 is the Schiff-base intermediate with substrate of the active site. Asp183 serves as a coordination point for Mg(2+).

Belongs to the HAD-like hydrolase superfamily. PhnX family. In terms of assembly, homodimer. It depends on Mg(2+) as a cofactor.

The enzyme catalyses phosphonoacetaldehyde + H2O = acetaldehyde + phosphate + H(+). Its function is as follows. Involved in phosphonate degradation. The protein is Phosphonoacetaldehyde hydrolase of Bacillus anthracis.